The chain runs to 1235 residues: Serine/threonine-protein kinase TAO2 (1235 aa).

Serine 9 is modified (phosphoserine). The region spanning 28–281 is the Protein kinase domain; it reads FSDLREIGHG…SEVLLKHRFV (254 aa). Residues 34–42 and lysine 57 contribute to the ATP site; that span reads IGHGSFGAV. The active-site Proton acceptor is the aspartate 151. The residue at position 181 (serine 181) is a Phosphoserine. The segment at 318-457 is disordered; it reads QEAPNGPGAE…TSTTSSARRR (140 aa). Low complexity predominate over residues 350 to 374; sequence SSHSVPSMSISASSQSSSVNSLADA. A compositionally biased stretch (acidic residues) spans 375–393; sequence SDNEEEEEEEEEEEEEEEG. A compositionally biased stretch (basic and acidic residues) spans 394–409; it reads PEAREMAMMQEGEHTV. Serine 414 is modified (phosphoserine). 2 coiled-coil regions span residues 486 to 547 and 574 to 601; these read SALR…RRHQ and KELAALLEAQKRTYKLRKEQLKEELQEN. Serine 656 is subject to Phosphoserine. Residues 681–713 are a coiled coil; that stretch reads LRQHEATRELELRQLQAVQRTRAELTRLQHQTE. 3 disordered regions span residues 732–777, 804–835, and 891–939; these read HAAQ…QPCS, KEGATLEPKQQRILGEESGAPSPSPQKHGSLV, and QGPA…RPCP. Positions 766–777 are enriched in polar residues; it reads NTGTPIEQQPCS. 3 positions are modified to phosphoserine: serine 777, serine 825, and serine 827. Residues 899 to 908 show a composition bias toward acidic residues; the sequence is PEEEEEEEEG. Residues 924-934 are compositionally biased toward pro residues; it reads PDIPPEPPPTH. Helical transmembrane passes span 965-985 and 987-1007; these read LLPLLLLLLLPLLAAQGGGGL and AALLALEVGLVGLGASYLLLC. Phosphoserine is present on residues histidine 1011 and glycine 1031. 3 helical membrane-spanning segments follow: residues 1012–1032, 1043–1063, and 1166–1186; these read LPSSLFLLLAQGTALGAVLGL, LGLGAAWLLAWPGLALPLVAM, and QGLASHLPPWAIHTLASWGLL. The tract at residues 1198 to 1235 is disordered; it reads LPRSQRQLGPPASRQPLPGTLAGRRSRTRQSRALPPWR.

This sequence belongs to the protein kinase superfamily. STE Ser/Thr protein kinase family. STE20 subfamily. As to quaternary structure, interacts with MAP2K3 and MAP2K6. Self-associates. Interacts with tubulins through the C-terminal domain. Interacts with MAP3K7 and interferes with MAP3K7-binding to CHUK and thus prevents NF-kappa-B activation. Isoform 2 interacts with PCDH8; this complex may also include CDH2. Requires Mg(2+) as cofactor. Isoforms 1 and 2 are autophosphorylated. Post-translationally, C-terminal cleavage of isoform 1 and subsequent nuclear localization requires CASP9 activity. In terms of processing, autophosphorylated. Phosphorylated by ATM. Phosphorylated on Ser-1031 by MAPK14. This phosphorylation is required PCDH8 for endocytosis. As to expression, ubiquitously expressed, with a higher level of expression in testis and brain.

The protein localises to the cytoplasmic vesicle membrane. The protein resides in the cytoplasm. Its subcellular location is the cytoskeleton. It localises to the nucleus. It is found in the cell projection. The protein localises to the dendrite. It catalyses the reaction L-seryl-[protein] + ATP = O-phospho-L-seryl-[protein] + ADP + H(+). The enzyme catalyses L-threonyl-[protein] + ATP = O-phospho-L-threonyl-[protein] + ADP + H(+). Its activity is regulated as follows. Selectively inhibited by the enantiopure organoruthenium inhibitor 9E1. Activated following arsenic trioxide (As(2)O(3)) treatment. Its function is as follows. Serine/threonine-protein kinase involved in different processes such as membrane blebbing and apoptotic bodies formation DNA damage response and MAPK14/p38 MAPK stress-activated MAPK cascade. Phosphorylates itself, MBP, activated MAPK8, MAP2K3, MAP2K6 and tubulins. Activates the MAPK14/p38 MAPK signaling pathway through the specific activation and phosphorylation of the upstream MAP2K3 and MAP2K6 kinases. In response to DNA damage, involved in the G2/M transition DNA damage checkpoint by activating the p38/MAPK14 stress-activated MAPK cascade, probably by mediating phosphorylation of upstream MAP2K3 and MAP2K6 kinases. Isoform 1, but not isoform 2, plays a role in apoptotic morphological changes, including cell contraction, membrane blebbing and apoptotic bodies formation. This function, which requires the activation of MAPK8/JNK and nuclear localization of C-terminally truncated isoform 1, may be linked to the mitochondrial CASP9-associated death pathway. Isoform 1 binds to microtubules and affects their organization and stability independently of its kinase activity. Prevents MAP3K7-mediated activation of CHUK, and thus NF-kappa-B activation, but not that of MAPK8/JNK. May play a role in the osmotic stress-MAPK8 pathway. Isoform 2, but not isoform 1, is required for PCDH8 endocytosis. Following homophilic interactions between PCDH8 extracellular domains, isoform 2 phosphorylates and activates MAPK14/p38 MAPK which in turn phosphorylates isoform 2. This process leads to PCDH8 endocytosis and CDH2 cointernalization. Both isoforms are involved in MAPK14 phosphorylation. The polypeptide is Serine/threonine-protein kinase TAO2 (TAOK2) (Homo sapiens (Human)).